The chain runs to 249 residues: Putative [LysW]-aminoadipate/[LysW]-glutamate kinase (249 aa).

Substrate-binding residues include arginine 63 and asparagine 166.

It belongs to the acetylglutamate kinase family. LysZ subfamily.

It localises to the cytoplasm. It carries out the reaction [amino-group carrier protein]-C-terminal-N-(1,4-dicarboxybutan-1-yl)-L-glutamine + ATP = [amino-group carrier protein]-C-terminal-N-(1-carboxy-5-phosphooxy-5-oxopentan-1-yl)-L-glutamine + ADP. The catalysed reaction is [amino-group carrier protein]-C-terminal-gamma-(L-glutamyl)-L-glutamate + ATP = [amino-group carrier protein]-C-terminal-gamma-(5-phospho-L-glutamyl)-L-glutamate + ADP. It participates in amino-acid biosynthesis; L-lysine biosynthesis via AAA pathway; L-lysine from L-alpha-aminoadipate (Thermus route): step 2/5. The protein operates within amino-acid biosynthesis; L-arginine biosynthesis. Involved in both the arginine and lysine biosynthetic pathways. Phosphorylates the LysW-bound precursors glutamate (for arginine biosynthesis), respectively alpha-aminoadipate (for lysine biosynthesis). This Pyrococcus furiosus (strain ATCC 43587 / DSM 3638 / JCM 8422 / Vc1) protein is Putative [LysW]-aminoadipate/[LysW]-glutamate kinase.